Reading from the N-terminus, the 260-residue chain is MATGAEQTGGGFPVDPLHQFVVQPLIPLNIGGLDASFTNASLWMVVTVVAIGLFMTLGMRSGAMVPGRMQSVVESFYTFIANMVRDNAGHDAMRFFPFIFSLFMFIFFANMIGMFPYAFTVTSHIVVTFALAIVVFLGVTLTGFVLHGPRFLKVFVPSGVPMALLPLVVAIEIISYFSRPISHSVRLFANMLAGHIMLKVFAGFVLTFMTMGVVGWAGMILPLFMIVALTALEFLVAALQAYVFTILTCMYLHDALHPGH.

Transmembrane regions (helical) follow at residues 37–57 (FTNA…FMTL), 95–115 (FFPF…IGMF), 125–145 (IVVT…TGFV), 154–174 (VFVP…IEII), 191–211 (MLAG…FMTM), and 233–253 (EFLV…MYLH).

It belongs to the ATPase A chain family. As to quaternary structure, F-type ATPases have 2 components, CF(1) - the catalytic core - and CF(0) - the membrane proton channel. CF(1) has five subunits: alpha(3), beta(3), gamma(1), delta(1), epsilon(1). CF(0) has three main subunits: a(1), b(2) and c(9-12). The alpha and beta chains form an alternating ring which encloses part of the gamma chain. CF(1) is attached to CF(0) by a central stalk formed by the gamma and epsilon chains, while a peripheral stalk is formed by the delta and b chains.

Its subcellular location is the cell inner membrane. Key component of the proton channel; it plays a direct role in the translocation of protons across the membrane. This is ATP synthase subunit a from Parvibaculum lavamentivorans (strain DS-1 / DSM 13023 / NCIMB 13966).